The following is a 2778-amino-acid chain: Probable ubiquitin carboxyl-terminal hydrolase FAF (2778 aa).

Residues 1–85 (MTFDTRRHTT…SQSSDDVAAS (85 aa)) are disordered. A compositionally biased stretch (low complexity) spans 10–39 (TGQPGSTAPSSSSSTTSTTTTTTSPAQSAG). Over residues 71–85 (QPATDSQSSDDVAAS) the composition is skewed to polar residues. Ser-924 is subject to Phosphoserine. Residues 1065 to 1094 (GTGLASSPDSSSDSSTGSPPRPCPDMQRVE) form a disordered region. Positions 1070–1082 (SSPDSSSDSSTGS) are enriched in low complexity. A USP domain is found at 1668–2062 (CGLKNAGATC…NAYMLFYTRC (395 aa)). The active-site Nucleophile is the Cys-1677. The active-site Proton acceptor is His-1986. Disordered regions lie at residues 2568-2632 (VSEK…GDSN) and 2644-2691 (AYTS…INGL). Low complexity-rich tracts occupy residues 2614–2627 (TPTT…AWPA) and 2644–2671 (AYTS…GSGA). The segment covering 2672–2691 (NSETESSAQETTGETTINGL) has biased composition (polar residues).

The protein belongs to the peptidase C19 family. In terms of assembly, interacts with imd. In terms of processing, ubiquitinated. Ubiquitination is enhanced by the expression of imd. As to expression, eye disks and ovaries. Expressed in larval fat body.

It carries out the reaction Thiol-dependent hydrolysis of ester, thioester, amide, peptide and isopeptide bonds formed by the C-terminal Gly of ubiquitin (a 76-residue protein attached to proteins as an intracellular targeting signal).. Ubiquitin C-terminal hydrolase involved in development and the imd/NF-kappa-B (IMD) signaling cascade. Required for eye and embryo development, and plays a role in compound eye assembly and oogenesis respectively. In the larval eye disks, cells outside the assembling facets require this protein for short-range cell interactions that prevent the mystery cells from becoming photoreceptors. Also required for nuclear migration and cellularization in early embryogenesis and could play a role in pole cell determination, development or function. Regulates the IMD signaling cascade at later stages of infection (around 6 hours post-infection) by inhibiting the expression of the antimicrobial peptides Dpt and Dro. Acts by modulating the state of imd polyubiquitination and/or stability; a function which appears to be independent of its enzymatic activity. In turn, imd enhances the polyubiquitination and stability of faf suggesting that they may form a regulatory feedback mechanism within the Imd pathway. This is Probable ubiquitin carboxyl-terminal hydrolase FAF (faf) from Drosophila melanogaster (Fruit fly).